The following is an 885-amino-acid chain: Alanine--tRNA ligase (885 aa).

4 residues coordinate Zn(2+): histidine 572, histidine 576, cysteine 675, and histidine 679.

This sequence belongs to the class-II aminoacyl-tRNA synthetase family. Zn(2+) is required as a cofactor.

It localises to the cytoplasm. The catalysed reaction is tRNA(Ala) + L-alanine + ATP = L-alanyl-tRNA(Ala) + AMP + diphosphate. Its function is as follows. Catalyzes the attachment of alanine to tRNA(Ala) in a two-step reaction: alanine is first activated by ATP to form Ala-AMP and then transferred to the acceptor end of tRNA(Ala). Also edits incorrectly charged Ser-tRNA(Ala) and Gly-tRNA(Ala) via its editing domain. This Leifsonia xyli subsp. xyli (strain CTCB07) protein is Alanine--tRNA ligase.